Consider the following 31-residue polypeptide: Cytochrome b6-f complex subunit 6 (31 aa).

Residues 4-24 (ILTYFGILFGILTITVIIFVA) form a helical membrane-spanning segment.

It belongs to the PetL family. In terms of assembly, the 4 large subunits of the cytochrome b6-f complex are cytochrome b6, subunit IV (17 kDa polypeptide, PetD), cytochrome f and the Rieske protein, while the 4 small subunits are PetG, PetL, PetM and PetN. The complex functions as a dimer.

The protein resides in the plastid. It localises to the chloroplast thylakoid membrane. Its function is as follows. Component of the cytochrome b6-f complex, which mediates electron transfer between photosystem II (PSII) and photosystem I (PSI), cyclic electron flow around PSI, and state transitions. PetL is important for photoautotrophic growth as well as for electron transfer efficiency and stability of the cytochrome b6-f complex. This Chaetosphaeridium globosum (Charophycean green alga) protein is Cytochrome b6-f complex subunit 6.